A 194-amino-acid polypeptide reads, in one-letter code: Small ribosomal subunit protein eS7 (194 aa).

It belongs to the eukaryotic ribosomal protein eS7 family.

In Drosophila yakuba (Fruit fly), this protein is Small ribosomal subunit protein eS7 (RpS7).